A 194-amino-acid polypeptide reads, in one-letter code: Peptide deformylase (194 aa).

Cys105 and His147 together coordinate Fe cation. The active site involves Glu148. His151 is a Fe cation binding site.

The protein belongs to the polypeptide deformylase family. Requires Fe(2+) as cofactor.

It carries out the reaction N-terminal N-formyl-L-methionyl-[peptide] + H2O = N-terminal L-methionyl-[peptide] + formate. In terms of biological role, removes the formyl group from the N-terminal Met of newly synthesized proteins. Requires at least a dipeptide for an efficient rate of reaction. N-terminal L-methionine is a prerequisite for activity but the enzyme has broad specificity at other positions. The polypeptide is Peptide deformylase (Flavobacterium psychrophilum (strain ATCC 49511 / DSM 21280 / CIP 103535 / JIP02/86)).